The sequence spans 99 residues: Ragulator complex protein LAMTOR4 (99 aa).

The residue at position 1 (Met1) is an N-acetylmethionine. At Thr2 the chain carries N-acetylthreonine; in Ragulator complex protein LAMTOR4, N-terminally processed. A Phosphoserine; by PKA modification is found at Ser67.

Belongs to the LAMTOR4 family. As to quaternary structure, part of the Ragulator complex composed of LAMTOR1, LAMTOR2, LAMTOR3, LAMTOR4 and LAMTOR5. LAMTOR4 and LAMTOR5 form a heterodimer that interacts, through LAMTOR1, with a LAMTOR2, LAMTOR3 heterodimer. The Ragulator complex interacts with both the mTORC1 complex and heterodimers constituted of the Rag GTPases RagA/RRAGA, RagB/RRAGB, RagC/RRAGC and RagD/RRAGD; regulated by amino acid availability. The Ragulator complex interacts with SLC38A9; the probable amino acid sensor. Component of the lysosomal folliculin complex (LFC), composed of FLCN, FNIP1 (or FNIP2), RagA/RRAGA or RagB/RRAGB GDP-bound, RagC/RRAGC or RagD/RRAGD GTP-bound, and Ragulator. Post-translationally, phosphorylation at Ser-67 by PKA inhibits Ragulator complex assembly.

The protein localises to the lysosome. Functionally, as part of the Ragulator complex it is involved in amino acid sensing and activation of mTORC1, a signaling complex promoting cell growth in response to growth factors, energy levels, and amino acids. Activated by amino acids through a mechanism involving the lysosomal V-ATPase, the Ragulator plays a dual role for the small GTPases Rag (RagA/RRAGA, RagB/RRAGB, RagC/RRAGC and/or RagD/RRAGD): it (1) acts as a guanine nucleotide exchange factor (GEF), activating the small GTPases Rag and (2) mediates recruitment of Rag GTPases to the lysosome membrane. Activated Ragulator and Rag GTPases function as a scaffold recruiting mTORC1 to lysosomes where it is in turn activated. The protein is Ragulator complex protein LAMTOR4 of Homo sapiens (Human).